We begin with the raw amino-acid sequence, 221 residues long: Uracil-DNA glycosylase 1 (221 aa).

D61 serves as the catalytic Proton acceptor.

Belongs to the uracil-DNA glycosylase (UDG) superfamily. UNG family.

The protein resides in the cytoplasm. The enzyme catalyses Hydrolyzes single-stranded DNA or mismatched double-stranded DNA and polynucleotides, releasing free uracil.. Excises uracil residues from the DNA which can arise as a result of misincorporation of dUMP residues by DNA polymerase or due to deamination of cytosine. This is Uracil-DNA glycosylase 1 from Listeria innocua serovar 6a (strain ATCC BAA-680 / CLIP 11262).